The primary structure comprises 143 residues: HTH-type transcriptional regulator BudR (143 aa).

One can recognise an HTH lysR-type domain in the interval 1-58 (MELRYLRYFVAVARERHFTRAAKALGISQPPLSQQIKRLEEEVGTPLFRRLTRGVELT). The H-T-H motif DNA-binding region spans 18-37 (FTRAAKALGISQPPLSQQIK).

The protein belongs to the LysR transcriptional regulatory family.

Functionally, regulator of the budABC operon for 2,3-butanediol synthesis. The sequence is that of HTH-type transcriptional regulator BudR (budR) from Klebsiella aerogenes (Enterobacter aerogenes).